The sequence spans 110 residues: MSVVIRLARAGTKKRPVYHVVVADSRFPRDGRFIERLGYFNPLMPKDNEARLKLDMEKVKGWLAKGAQPSDRVARFLDAAGVKKREARQNPIKAVPRKERKAQAEAAAKG.

The disordered stretch occupies residues alanine 87–glycine 110.

Belongs to the bacterial ribosomal protein bS16 family.

This Bradyrhizobium sp. (strain BTAi1 / ATCC BAA-1182) protein is Small ribosomal subunit protein bS16.